The sequence spans 377 residues: Chaperone protein DnaJ (377 aa).

A J domain is found at 5 to 69 (EYYDRLGLSK…QKRAAYDQYG (65 aa)). A CR-type zinc finger spans residues 133-215 (GAEKEIHYNR…CHGTGREKQS (83 aa)). 8 residues coordinate Zn(2+): Cys146, Cys149, Cys163, Cys166, Cys189, Cys192, Cys203, and Cys206. CXXCXGXG motif repeat units lie at residues 146–153 (CKTCSGSG), 163–170 (CGRCHGHG), 189–196 (CDVCHGTG), and 203–210 (CQTCHGTG).

The protein belongs to the DnaJ family. As to quaternary structure, homodimer. It depends on Zn(2+) as a cofactor.

The protein resides in the cytoplasm. In terms of biological role, participates actively in the response to hyperosmotic and heat shock by preventing the aggregation of stress-denatured proteins and by disaggregating proteins, also in an autonomous, DnaK-independent fashion. Unfolded proteins bind initially to DnaJ; upon interaction with the DnaJ-bound protein, DnaK hydrolyzes its bound ATP, resulting in the formation of a stable complex. GrpE releases ADP from DnaK; ATP binding to DnaK triggers the release of the substrate protein, thus completing the reaction cycle. Several rounds of ATP-dependent interactions between DnaJ, DnaK and GrpE are required for fully efficient folding. Also involved, together with DnaK and GrpE, in the DNA replication of plasmids through activation of initiation proteins. The protein is Chaperone protein DnaJ of Streptococcus thermophilus (strain CNRZ 1066).